A 631-amino-acid polypeptide reads, in one-letter code: MATQSFSVAPSVQWTERDATLQTSPSVVVQGATVGKFQWGEVELPVLVTGGETGLVKKFFKPNDSTATDFLVIADFLSYSSMAWVTRVVGPLAKNSVTKGQTAITIKNKLDFETASPSASITWAGRYPGSLGNDIAINVCDSAGFPTWEFRNNFAYAPQSGEFHVVVVDKVGRITDSAGAVGQVDRISVSGTATAAGTISVAGEDIAYLDTDTPATLATKIGAALTALTDVYSSVVVKSNTVIVTHKAIGPQTVTAIVPDDKGLTATAVITTVGASGSIIEKYELMQNTQGSKKSDGANAYFKDVINDTSNWVYTFATALAAGVVELEGGVDDYNINRVAAIQVLNNAEAYDAKPVFAYCEELIEQQALIDLSTERKDTVSFVSPLRDTVVGNRGREMDDVVSWRESLVRDSSYFFMDDNWAYVYDKYNDKMRWIPACGGTAGVWARSIEIAGIYKSPAFHNRGKYNNYNRMAWSASSDERAVLYRNQINSIVTFSNEGIVLYGDKTGLTRPSAFDRINVRGLFIMAEQNIAAIAKYYLGENNDAFTRSLFSNAVRPYIRQLANMGAIYDGKVKCDEDNNTADVIAANQMVAGIWLKPEYSINWVYLDFAAVRPDMEFSEIESGGGIVAAS.

The protein belongs to the myoviridae tail sheath protein family. As to quaternary structure, homomultimer.

It is found in the virion. The protein resides in the host cytoplasm. In terms of biological role, polymerizes as an extended structure around the baseplate-tail tube complex. During ejection, the sheath shifts to a contracted form, thereby making the inner tail tube protrude through the host cell envelope. This chain is Tail sheath protein, found in Salmonella typhi.